Reading from the N-terminus, the 229-residue chain is tRNA (guanine-N(1)-)-methyltransferase (229 aa).

Residues Gly-109 and 129–134 each bind S-adenosyl-L-methionine; that span reads IGDFIL.

It belongs to the RNA methyltransferase TrmD family. As to quaternary structure, homodimer.

The protein resides in the cytoplasm. The enzyme catalyses guanosine(37) in tRNA + S-adenosyl-L-methionine = N(1)-methylguanosine(37) in tRNA + S-adenosyl-L-homocysteine + H(+). In terms of biological role, specifically methylates guanosine-37 in various tRNAs. The chain is tRNA (guanine-N(1)-)-methyltransferase from Helicobacter pylori (strain Shi470).